A 1040-amino-acid polypeptide reads, in one-letter code: Multidrug resistance protein MdtB (1040 aa).

Transmembrane regions (helical) follow at residues 16-36 (FIMR…AGII), 347-367 (LMMA…NIPA), 369-389 (IIPG…MVFL), 396-416 (LTLM…IVVI), 440-460 (IGFT…PLLF), 472-492 (FAIT…TLTP), 537-557 (WLTL…WVFI), 863-883 (LGST…VLGI), 888-908 (FIHP…ALLA), 911-931 (IAGS…IGIV), 968-988 (ILMT…STGV), and 998-1018 (IGMV…TPVI).

Belongs to the resistance-nodulation-cell division (RND) (TC 2.A.6) family. MdtB subfamily. Part of a tripartite efflux system composed of MdtA, MdtB and MdtC. MdtB forms a heteromultimer with MdtC.

The protein resides in the cell inner membrane. The MdtABC tripartite complex confers resistance against novobiocin and deoxycholate. This chain is Multidrug resistance protein MdtB, found in Escherichia coli O9:H4 (strain HS).